A 313-amino-acid chain; its full sequence is Carbamate kinase 2 (313 aa).

Belongs to the carbamate kinase family.

It is found in the cytoplasm. It catalyses the reaction hydrogencarbonate + NH4(+) + ATP = carbamoyl phosphate + ADP + H2O + H(+). Its pathway is metabolic intermediate metabolism; carbamoyl phosphate degradation; CO(2) and NH(3) from carbamoyl phosphate: step 1/1. The polypeptide is Carbamate kinase 2 (arcC2) (Staphylococcus aureus (strain Mu50 / ATCC 700699)).